Reading from the N-terminus, the 236-residue chain is MGNLHTSIAVASICLTSAFLGCVFGLGFFVWIIYGYSIGGFFAFLSLFHLLEFYITARFQGSQLSWDSFILNNGKAYWLAMLVGLLECLLSGGKSFAKVINCLRFPSFLINFIFSVYQTSALGFLCLGQYLRSSAMVQAGQSFSHIVASKRNKDHLLVTDGIYAYVRHPSYVGFFIWALGTQMLLGNFVSTLLFSLVLWKFFSQRITTEEAYLVSFFGDSYEQYRKKVPSGIPLIP.

Helical transmembrane passes span 3–23, 24–44, 76–96, and 108–128; these read NLHTSIAVASICLTSAFLGCV, FGLGFFVWIIYGYSIGGFFAF, AYWLAMLVGLLECLLSGGKSF, and FLINFIFSVYQTSALGFLCLG. S-adenosyl-L-methionine is bound by residues 155 to 158, Tyr163, and 168 to 171; these read HLLV and HPSY. A helical membrane pass occupies residues 174-194; that stretch reads FFIWALGTQMLLGNFVSTLLF. Residue Arg205 coordinates substrate. Glu209 is a binding site for S-adenosyl-L-methionine.

It belongs to the class VI-like SAM-binding methyltransferase superfamily. Isoprenylcysteine carboxyl methyltransferase family.

The protein localises to the membrane. The enzyme catalyses [protein]-C-terminal S-[(2E,6E)-farnesyl]-L-cysteine + S-adenosyl-L-methionine = [protein]-C-terminal S-[(2E,6E)-farnesyl]-L-cysteine methyl ester + S-adenosyl-L-homocysteine. Functionally, mediates C-terminal methylation of the isoprenylated C-terminal cysteine in M-factor. This chain is Protein-S-isoprenylcysteine O-methyltransferase (mam4), found in Schizosaccharomyces pombe (strain 972 / ATCC 24843) (Fission yeast).